A 65-amino-acid polypeptide reads, in one-letter code: Large ribosomal subunit protein uL29 (65 aa).

It belongs to the universal ribosomal protein uL29 family.

This chain is Large ribosomal subunit protein uL29, found in Desulforapulum autotrophicum (strain ATCC 43914 / DSM 3382 / VKM B-1955 / HRM2) (Desulfobacterium autotrophicum).